The sequence spans 337 residues: Phosphoribosylformylglycinamidine cyclo-ligase (337 aa).

Belongs to the AIR synthase family.

Its subcellular location is the cytoplasm. The enzyme catalyses 2-formamido-N(1)-(5-O-phospho-beta-D-ribosyl)acetamidine + ATP = 5-amino-1-(5-phospho-beta-D-ribosyl)imidazole + ADP + phosphate + H(+). The protein operates within purine metabolism; IMP biosynthesis via de novo pathway; 5-amino-1-(5-phospho-D-ribosyl)imidazole from N(2)-formyl-N(1)-(5-phospho-D-ribosyl)glycinamide: step 2/2. The polypeptide is Phosphoribosylformylglycinamidine cyclo-ligase (Gloeobacter violaceus (strain ATCC 29082 / PCC 7421)).